The primary structure comprises 360 residues: Peptide chain release factor 1 (360 aa).

Q237 is subject to N5-methylglutamine.

The protein belongs to the prokaryotic/mitochondrial release factor family. Methylated by PrmC. Methylation increases the termination efficiency of RF1.

The protein resides in the cytoplasm. Functionally, peptide chain release factor 1 directs the termination of translation in response to the peptide chain termination codons UAG and UAA. The chain is Peptide chain release factor 1 from Pseudomonas putida (strain GB-1).